We begin with the raw amino-acid sequence, 142 residues long: Autophagy-related protein 31 (142 aa).

The protein resides in the cytoplasm. It is found in the cytoskeleton. The protein localises to the preautophagosomal structure. In terms of biological role, plays a role in starvation-induced autophagy. Involved in mitophagy. Functions with ATG17 and ATG29 at the preautophagosomal structure (PAS) in order to form normal autophagosomes under starvation conditions. May be involved in microtubule function, such as chromosome segregation and karyogamy. The polypeptide is Autophagy-related protein 31 (CIS1) (Eremothecium gossypii (strain ATCC 10895 / CBS 109.51 / FGSC 9923 / NRRL Y-1056) (Yeast)).